Here is a 253-residue protein sequence, read N- to C-terminus: Ubiquinone biosynthesis O-methyltransferase (253 aa).

S-adenosyl-L-methionine-binding residues include Arg-45, Gly-76, Asp-97, and Met-140.

This sequence belongs to the methyltransferase superfamily. UbiG/COQ3 family.

It carries out the reaction a 3-demethylubiquinol + S-adenosyl-L-methionine = a ubiquinol + S-adenosyl-L-homocysteine + H(+). The enzyme catalyses a 3-(all-trans-polyprenyl)benzene-1,2-diol + S-adenosyl-L-methionine = a 2-methoxy-6-(all-trans-polyprenyl)phenol + S-adenosyl-L-homocysteine + H(+). It functions in the pathway cofactor biosynthesis; ubiquinone biosynthesis. Its function is as follows. O-methyltransferase that catalyzes the 2 O-methylation steps in the ubiquinone biosynthetic pathway. This Parvibaculum lavamentivorans (strain DS-1 / DSM 13023 / NCIMB 13966) protein is Ubiquinone biosynthesis O-methyltransferase.